Reading from the N-terminus, the 477-residue chain is Aspartyl/glutamyl-tRNA(Asn/Gln) amidotransferase subunit B (477 aa).

Belongs to the GatB/GatE family. GatB subfamily. Heterotrimer of A, B and C subunits.

It catalyses the reaction L-glutamyl-tRNA(Gln) + L-glutamine + ATP + H2O = L-glutaminyl-tRNA(Gln) + L-glutamate + ADP + phosphate + H(+). It carries out the reaction L-aspartyl-tRNA(Asn) + L-glutamine + ATP + H2O = L-asparaginyl-tRNA(Asn) + L-glutamate + ADP + phosphate + 2 H(+). Allows the formation of correctly charged Asn-tRNA(Asn) or Gln-tRNA(Gln) through the transamidation of misacylated Asp-tRNA(Asn) or Glu-tRNA(Gln) in organisms which lack either or both of asparaginyl-tRNA or glutaminyl-tRNA synthetases. The reaction takes place in the presence of glutamine and ATP through an activated phospho-Asp-tRNA(Asn) or phospho-Glu-tRNA(Gln). The sequence is that of Aspartyl/glutamyl-tRNA(Asn/Gln) amidotransferase subunit B from Oenococcus oeni (strain ATCC BAA-331 / PSU-1).